We begin with the raw amino-acid sequence, 133 residues long: Snaclec botrocetin subunit alpha (133 aa).

Intrachain disulfides connect Cys2/Cys13, Cys30/Cys128, and Cys103/Cys120. A C-type lectin domain is found at 9–129 (YEGNCYKFFQ…CAQKNPFVCK (121 aa)).

This sequence belongs to the snaclec family. In terms of assembly, heterodimer of subunits alpha and beta; disulfide-linked. Botrocetin and vWF form a soluble complex. As to expression, expressed by the venom gland.

Its subcellular location is the secreted. Functionally, snaclec that binds to von Willebrand factor (VWF) and induces its interaction with GPIbalpha (GP1BA) (via the vWF A1 domain), resulting in platelet aggregation. The protein is Snaclec botrocetin subunit alpha of Bothrops jararaca (Jararaca).